A 355-amino-acid chain; its full sequence is Anthranilate phosphoribosyltransferase (355 aa).

Residues glycine 99, 102–103, threonine 107, 109–112, 127–135, and serine 139 contribute to the 5-phospho-alpha-D-ribose 1-diphosphate site; these read GD, NIST, and KHGNRSVSS. Glycine 99 contacts anthranilate. Serine 111 contacts Mg(2+). Residue asparagine 130 participates in anthranilate binding. Arginine 185 serves as a coordination point for anthranilate. Residues aspartate 243 and glutamate 244 each contribute to the Mg(2+) site.

Belongs to the anthranilate phosphoribosyltransferase family. In terms of assembly, homodimer. It depends on Mg(2+) as a cofactor.

The enzyme catalyses N-(5-phospho-beta-D-ribosyl)anthranilate + diphosphate = 5-phospho-alpha-D-ribose 1-diphosphate + anthranilate. It participates in amino-acid biosynthesis; L-tryptophan biosynthesis; L-tryptophan from chorismate: step 2/5. Catalyzes the transfer of the phosphoribosyl group of 5-phosphorylribose-1-pyrophosphate (PRPP) to anthranilate to yield N-(5'-phosphoribosyl)-anthranilate (PRA). This chain is Anthranilate phosphoribosyltransferase, found in Pseudoalteromonas translucida (strain TAC 125).